The chain runs to 198 residues: Glycerol-3-phosphate acyltransferase (198 aa).

The next 6 helical transmembrane spans lie at 1–21, 53–73, 79–99, 111–131, 136–156, and 158–178; these read MNLL…GYLA, IIVF…AKYL, WQVA…WLNW, IFLG…IIMI, IVSL…FLSF, and GSNI…LVIW.

This sequence belongs to the PlsY family. Probably interacts with PlsX.

It is found in the cell inner membrane. It carries out the reaction an acyl phosphate + sn-glycerol 3-phosphate = a 1-acyl-sn-glycero-3-phosphate + phosphate. It functions in the pathway lipid metabolism; phospholipid metabolism. Catalyzes the transfer of an acyl group from acyl-phosphate (acyl-PO(4)) to glycerol-3-phosphate (G3P) to form lysophosphatidic acid (LPA). This enzyme utilizes acyl-phosphate as fatty acyl donor, but not acyl-CoA or acyl-ACP. The protein is Glycerol-3-phosphate acyltransferase of Prochlorococcus marinus (strain NATL1A).